Here is a 233-residue protein sequence, read N- to C-terminus: Delta-actitoxin-Amc1a (233 aa).

A signal peptide spans 1–18 (MKRIFIVALLFATCLVNA). 2 propeptides span residues 19 to 29 (KPSINDADIKR) and 30 to 33 (EPEP). A Hydroxyproline modification is found at Pro39. Cystine bridges form between Cys40-Cys51 and Cys43-Cys58. 2 consecutive propeptides follow at residues 61–63 (RKR) and 64–67 (EPEP). A Hydroxyproline modification is found at Pro73. 2 disulfide bridges follow: Cys74–Cys85 and Cys77–Cys92. 2 propeptides span residues 95 to 97 (RKR) and 98 to 101 (EPEP). The residue at position 107 (Pro107) is a Hydroxyproline. Disulfide bonds link Cys108/Cys119 and Cys111/Cys126. 2 consecutive propeptides follow at residues 129-131 (RKR) and 132-135 (EPEP). Pro141 carries the post-translational modification Hydroxyproline. 2 disulfides stabilise this stretch: Cys142-Cys153 and Cys145-Cys160. 2 propeptides span residues 163 to 165 (RKR) and 166 to 169 (EPEP). A Hydroxyproline modification is found at Pro175. 2 disulfides stabilise this stretch: Cys176–Cys187 and Cys179–Cys194. Propeptides lie at residues 197-199 (RKR) and 200-203 (EPEP). Pro209 bears the Hydroxyproline mark. 2 disulfide bridges follow: Cys210–Cys221 and Cys213–Cys228. The propeptide occupies 231-233 (RKR).

Belongs to the sea anemone BBH family. In terms of processing, each Am I peptide may contain 2 disulfide bonds. The precursor protein seems to be processed in the following sequence: release of the signal peptide and of the propeptide, production of six identical 34-residue peptides by cleavage between Arg and Glu, release of four N-terminal and three C-terminal residues from each peptide and hydroxylation of each Pro in position 6 of the resulting 27-residue peptides.

Its subcellular location is the secreted. The protein resides in the nematocyst. May inhibit voltage-gated sodium channels (Nav). This is Delta-actitoxin-Amc1a from Antheopsis maculata (Sea anemone).